The chain runs to 313 residues: Porphobilinogen deaminase (313 aa).

Cys243 carries the post-translational modification S-(dipyrrolylmethanemethyl)cysteine.

It belongs to the HMBS family. As to quaternary structure, monomer. Dipyrromethane is required as a cofactor.

The catalysed reaction is 4 porphobilinogen + H2O = hydroxymethylbilane + 4 NH4(+). It participates in porphyrin-containing compound metabolism; protoporphyrin-IX biosynthesis; coproporphyrinogen-III from 5-aminolevulinate: step 2/4. Functionally, tetrapolymerization of the monopyrrole PBG into the hydroxymethylbilane pre-uroporphyrinogen in several discrete steps. The chain is Porphobilinogen deaminase from Bordetella petrii (strain ATCC BAA-461 / DSM 12804 / CCUG 43448).